The chain runs to 208 residues: MGISRDHWHKRRATGGKRAPIRKKRKYELGRPAANTKLGPQRIHLVRSRGGNTKYRALRLDTGNFSWGSECSTRKSRIIDVVYNASNNELVRTKTLVKNAIVVVDATPFRQWYESHYLLPLGRKKGAKLTEAEDAIINKKRSQKTAKKYLARQRLSKVESALEEQFHTGRLLACVASRPGQCGRADGYILEGKELEFYLRKIKSKRAK.

The segment at 1 to 34 (MGISRDHWHKRRATGGKRAPIRKKRKYELGRPAA) is disordered. Residues 7-26 (HWHKRRATGGKRAPIRKKRK) are compositionally biased toward basic residues.

It belongs to the eukaryotic ribosomal protein eS8 family. Component of the small ribosomal subunit. Identified in a IGF2BP1-dependent mRNP granule complex containing untranslated mRNAs. Part of the small subunit (SSU) processome, composed of more than 70 proteins and the RNA chaperone small nucleolar RNA (snoRNA) U3.

The protein resides in the cytoplasm. It is found in the membrane. The protein localises to the nucleus. It localises to the nucleolus. Its function is as follows. Component of the small ribosomal subunit. The ribosome is a large ribonucleoprotein complex responsible for the synthesis of proteins in the cell. Part of the small subunit (SSU) processome, first precursor of the small eukaryotic ribosomal subunit. During the assembly of the SSU processome in the nucleolus, many ribosome biogenesis factors, an RNA chaperone and ribosomal proteins associate with the nascent pre-rRNA and work in concert to generate RNA folding, modifications, rearrangements and cleavage as well as targeted degradation of pre-ribosomal RNA by the RNA exosome. The polypeptide is Small ribosomal subunit protein eS8 (RpS8) (Spodoptera frugiperda (Fall armyworm)).